The following is a 408-amino-acid chain: MYDILQPELWVKIIDYSGEINLLLTDKNFFELFNLIDTKVDVVEYIVKNNLIDALKYFILLKKLRHPIMEKNIVTIKSLNKCLIKSCKKNKLNIIKYLVSLGADIKAGDDCAVQLASQNGHLEVIEYLVAQGANIRADNDYAVIWASRNGYLDIVKYLVSQGADIRANNDYAVRWASRNGHLKVVKYLVSLGANIRTENDYAIKYASENGYLRIVEYLVSQGADIRADNDYAVGLASSNGHFEVVEYLVSQGANIRVDNDYAVRLASSNGHLEVVKYLVSLRANIRARCDFAIKWSSSNGHLEVVKYLVSQGADIRSQNDYAVRYASTNGHLEVVKYLVGQGADIRTGDDYAVRWASRGGCLEVVKYLVDQGANIRAKDDYAVKWASEKGHLEIVKFLISQGAVLTKN.

11 ANK repeats span residues 78 to 107, 108 to 137, 139 to 167, 168 to 197, 198 to 227, 229 to 257, 259 to 287, 288 to 317, 318 to 347, 349 to 377, and 378 to 407; these read SLNKCLIKSCKKNKLNIIKYLVSLGADIKA, GDDCAVQLASQNGHLEVIEYLVAQGANIRA, NDYAVIWASRNGYLDIVKYLVSQGADIRA, NNDYAVRWASRNGHLKVVKYLVSLGANIRT, ENDYAIKYASENGYLRIVEYLVSQGADIRA, NDYAVGLASSNGHFEVVEYLVSQGANIRV, NDYAVRLASSNGHLEVVKYLVSLRANIRA, RCDFAIKWSSSNGHLEVVKYLVSQGADIRS, QNDYAVRYASTNGHLEVVKYLVGQGADIRT, DDYAVRWASRGGCLEVVKYLVDQGANIRA, and KDDYAVKWASEKGHLEIVKFLISQGAVLTK.

The chain is Putative ankyrin repeat protein L483 from Acanthamoeba polyphaga (Amoeba).